Consider the following 502-residue polypeptide: Glycerol kinase (502 aa).

Thr14 is an ADP binding site. The ATP site is built by Thr14, Thr15, and Ser16. Residue Thr14 coordinates sn-glycerol 3-phosphate. An ADP-binding site is contributed by Arg18. Arg84, Glu85, and Tyr136 together coordinate sn-glycerol 3-phosphate. Residues Arg84, Glu85, and Tyr136 each coordinate glycerol. At His232 the chain carries Phosphohistidine; by HPr. A sn-glycerol 3-phosphate-binding site is contributed by Asp246. Glycerol contacts are provided by Asp246 and Gln247. ADP is bound by residues Thr268 and Gly311. 4 residues coordinate ATP: Thr268, Gly311, Gln315, and Gly412. The ADP site is built by Gly412 and Asn416.

The protein belongs to the FGGY kinase family. As to quaternary structure, homotetramer and homodimer (in equilibrium). The phosphoenolpyruvate-dependent sugar phosphotransferase system (PTS), including enzyme I, and histidine-containing protein (HPr) are required for the phosphorylation, which leads to the activation of the enzyme.

It carries out the reaction glycerol + ATP = sn-glycerol 3-phosphate + ADP + H(+). It participates in polyol metabolism; glycerol degradation via glycerol kinase pathway; sn-glycerol 3-phosphate from glycerol: step 1/1. Its activity is regulated as follows. Activated by phosphorylation and inhibited by fructose 1,6-bisphosphate (FBP). Key enzyme in the regulation of glycerol uptake and metabolism. Catalyzes the phosphorylation of glycerol to yield sn-glycerol 3-phosphate. The polypeptide is Glycerol kinase (Streptococcus gordonii (strain Challis / ATCC 35105 / BCRC 15272 / CH1 / DL1 / V288)).